The sequence spans 201 residues: Probable quinol oxidase subunit 3 (201 aa).

The next 5 membrane-spanning stretches (helical) occupy residues 20 to 40 (LGFW…FATL), 62 to 82 (LVLI…ISIY), 91 to 111 (LMMF…GFEI), 133 to 153 (FFIL…WIIC), and 172 to 192 (FIVS…FTAV).

It belongs to the cytochrome c oxidase subunit 3 family.

It is found in the cell membrane. It catalyses the reaction 2 a quinol + O2 = 2 a quinone + 2 H2O. Functionally, catalyzes quinol oxidation with the concomitant reduction of oxygen to water. The protein is Probable quinol oxidase subunit 3 (qoxC) of Staphylococcus haemolyticus (strain JCSC1435).